Here is a 306-residue protein sequence, read N- to C-terminus: MNQYKNFIMQFEDIVGNNNVLIDEPMKKHTSFKVGGPADLLITPTTLEQVKDSIILCRNNSIPYYIIGNGSNLLVRDGGIRGVVIKFLKLGDIKVEGDRVIAQSGAPLTNICNEALKSNLGGLEFACGIPGSVGGAVTMNAGAYNGEISQVIESAKVIDKDGNVFLLNKEQLDLGYRMSAIQKYHYIVLEVTFKLHNSEYDTIKNRIMDLNRRRIEKQPLEYPSAGSTFKRPEGHFAAKLIEDTGLKGESIGGAQVSEKHSGFIINKGGATAGDILNLIEFVQNKVMEKFQVDLHTEVRIIGEENN.

Residues 34–198 enclose the FAD-binding PCMH-type domain; that stretch reads VGGPADLLIT…LEVTFKLHNS (165 aa). R177 is an active-site residue. S227 acts as the Proton donor in catalysis. E297 is an active-site residue.

Belongs to the MurB family. The cofactor is FAD.

It localises to the cytoplasm. It catalyses the reaction UDP-N-acetyl-alpha-D-muramate + NADP(+) = UDP-N-acetyl-3-O-(1-carboxyvinyl)-alpha-D-glucosamine + NADPH + H(+). It functions in the pathway cell wall biogenesis; peptidoglycan biosynthesis. Its function is as follows. Cell wall formation. The sequence is that of UDP-N-acetylenolpyruvoylglucosamine reductase from Clostridium botulinum (strain Okra / Type B1).